A 449-amino-acid chain; its full sequence is MGRLFGTDGVRGVANLELTPKLAYQLGQAGAYVLTGETKHTPKILVGMDTRISGDMLEAALISGICSVGAQVVSLGVIPTPAIAYLTRQYDADAGVVISASHNPFEYNGIKFFNSNGYKLPDAIEDKIEEIIQNGGEDLPKPVGQNIGFKCYQENALEDYVNFVKGTITGDFEGIKVAIDCANGASFQAAPMALFDLKADVSVINNEPDGTNINSGCGSTHMRQLQAYVKEIKADIGFAFDGDADRVLAVDENGNIVDGDQIMAIIGLYLKDKGILSQNTIVATVMSNMGLDIMAKNKGLTIEKTKVGDRYVLEEMLNKGYMLGGEQSGHIIFLDHNTTGDGLLTAVQLLKVLKDSGKKLSELAGVMEILPQVLINAKVTNEKKYKYLDDEVIKKMCKELEDEFKGEGRVLIRPSGTEPLVRVMIEGKDKDIITRRAKELVRVIEGRLS.

Residue S101 is the Phosphoserine intermediate of the active site. Mg(2+)-binding residues include S101, D241, D243, and D245. A Phosphoserine modification is found at S101.

This sequence belongs to the phosphohexose mutase family. Mg(2+) serves as cofactor. Activated by phosphorylation.

It carries out the reaction alpha-D-glucosamine 1-phosphate = D-glucosamine 6-phosphate. In terms of biological role, catalyzes the conversion of glucosamine-6-phosphate to glucosamine-1-phosphate. The sequence is that of Phosphoglucosamine mutase from Ruminiclostridium cellulolyticum (strain ATCC 35319 / DSM 5812 / JCM 6584 / H10) (Clostridium cellulolyticum).